The sequence spans 301 residues: Mitochondrial carnitine/acylcarnitine carrier protein (301 aa).

The residue at position 2 (Ala-2) is an N-acetylalanine. Residues 2-12 are Cytoplasmic-facing; it reads AEEPKPISPLK. Solcar repeat units lie at residues 8–99, 108–196, and 207–293; these read ISPL…GKRL, LTYP…LKNL, and LSVP…PMKI. The chain crosses the membrane as a helical span at residues 13-31; it reads NLLAGGFGGVCLVFVGHPL. The Mitochondrial matrix segment spans residues 32-73; that stretch reads DTVKVRLQTQPPSLPGQPPMYSGTIDCFRKTLFREGITGLYR. Residues 74–93 traverse the membrane as a helical segment; that stretch reads GMAAPIIGVTPMFAVCFFGF. At 94 to 112 the chain is on the cytoplasmic side; it reads GLGKRLQQKSPEDELTYPQ. The helical transmembrane segment at 113 to 131 threads the bilayer; the sequence is LFTAGMLSGVFTTGIMTPG. Over 132 to 170 the chain is Mitochondrial matrix; it reads ERIKCLLQIQASSGKNKYSGTLDCAKKLYQEFGIRGFYK. 2 positions are modified to N6-acetyllysine: Lys-148 and Lys-157. Position 170 is an N6-acetyllysine; alternate (Lys-170). Residue Lys-170 is modified to N6-succinyllysine; alternate. A helical transmembrane segment spans residues 171–190; sequence GTALTLMRDVPASGMYFMTY. The Cytoplasmic segment spans residues 191–211; the sequence is EWLKNLFTPQGKSVHDLSVPR. The helical transmembrane segment at 212–230 threads the bilayer; sequence VLVAGGFRGIFNWVVAIPP. Over 231 to 267 the chain is Mitochondrial matrix; that stretch reads DVLKSRFQTAPPGKYPNGFRDVLRELIREEGVTSLYK. The chain crosses the membrane as a helical span at residues 268–287; that stretch reads GFNAVMIRAFPANAACFLGF. The Cytoplasmic portion of the chain corresponds to 288–301; sequence EIPMKILNWIAPNL.

The protein belongs to the mitochondrial carrier (TC 2.A.29) family. Post-translationally, the N-terminus is blocked.

Its subcellular location is the mitochondrion inner membrane. It catalyses the reaction O-acetyl-(R)-carnitine(in) + (R)-carnitine(out) = O-acetyl-(R)-carnitine(out) + (R)-carnitine(in). The enzyme catalyses an O-acyl-(R)-carnitine(in) + (R)-carnitine(out) = an O-acyl-(R)-carnitine(out) + (R)-carnitine(in). It carries out the reaction O-propanoyl-(R)-carnitine(in) + (R)-carnitine(out) = O-propanoyl-(R)-carnitine(out) + (R)-carnitine(in). The catalysed reaction is O-hexadecanoyl-(R)-carnitine(in) + (R)-carnitine(out) = O-hexadecanoyl-(R)-carnitine(out) + (R)-carnitine(in). It catalyses the reaction O-octanoyl-(R)-carnitine(in) + (R)-carnitine(out) = O-octanoyl-(R)-carnitine(out) + (R)-carnitine(in). The enzyme catalyses (R)-carnitine(in) = (R)-carnitine(out). Functionally, mediates the electroneutral exchange of acylcarnitines (O-acyl-(R)-carnitine or L-acylcarnitine) of different acyl chain lengths (ranging from O-acetyl-(R)-carnitine to long-chain O-acyl-(R)-carnitines) with free carnitine ((R)-carnitine or L-carnitine) across the mitochondrial inner membrane, via a ping-pong mechanism. Key player in the mitochondrial oxidation pathway, it translocates the fatty acids in the form of acylcarnitines into the mitochondrial matrix, where the carnitine palmitoyltransferase 2 (CPT-2) activates them to undergo fatty acid beta-oxidation. Catalyzes the unidirectional transport (uniport) of carnitine at lower rates than the antiport (exchange). This is Mitochondrial carnitine/acylcarnitine carrier protein from Rattus norvegicus (Rat).